Reading from the N-terminus, the 288-residue chain is MVAKIIDGKTIAQQVRNEVAGLVQQRLAAGKRAPGLAVVLVGENPASQIYVSSKRRACEEVGFLSRSYDLPASTSEAQLLELITQLNDDAEIDGILVQLPLPAGIDNTKVLEHISPAKDVDGFHPYNVGRLCQRAPTLRPCTPRGIVTLLERYQIDTFGLNAVVVGASNIVGRPMSMELLLAGCTTTVTHRFTKNLRQHIENADLLVVAVGKPGFIPGDWIKPGAIVIDVGINRLESGKVVGDVDFDLASTRASWITPVPGGVGPMTVATLIQNTLQACENNDNGVSA.

Residues 166-168 (GAS) and I232 each bind NADP(+).

This sequence belongs to the tetrahydrofolate dehydrogenase/cyclohydrolase family. Homodimer.

It carries out the reaction (6R)-5,10-methylene-5,6,7,8-tetrahydrofolate + NADP(+) = (6R)-5,10-methenyltetrahydrofolate + NADPH. The enzyme catalyses (6R)-5,10-methenyltetrahydrofolate + H2O = (6R)-10-formyltetrahydrofolate + H(+). Its pathway is one-carbon metabolism; tetrahydrofolate interconversion. Functionally, catalyzes the oxidation of 5,10-methylenetetrahydrofolate to 5,10-methenyltetrahydrofolate and then the hydrolysis of 5,10-methenyltetrahydrofolate to 10-formyltetrahydrofolate. The sequence is that of Bifunctional protein FolD from Erwinia tasmaniensis (strain DSM 17950 / CFBP 7177 / CIP 109463 / NCPPB 4357 / Et1/99).